The chain runs to 253 residues: Pimeloyl-[acyl-carrier protein] methyl ester esterase (253 aa).

Residues Trp18, 78–79 (SL), and 139–143 (FLALD) contribute to the substrate site. The active-site Nucleophile is the Ser78. Catalysis depends on residues Asp203 and His231. His231 is a substrate binding site.

This sequence belongs to the AB hydrolase superfamily. Carboxylesterase BioH family. In terms of assembly, monomer.

The protein localises to the cytoplasm. The enzyme catalyses 6-carboxyhexanoyl-[ACP] methyl ester + H2O = 6-carboxyhexanoyl-[ACP] + methanol + H(+). It functions in the pathway cofactor biosynthesis; biotin biosynthesis. The physiological role of BioH is to remove the methyl group introduced by BioC when the pimeloyl moiety is complete. It allows to synthesize pimeloyl-ACP via the fatty acid synthetic pathway through the hydrolysis of the ester bonds of pimeloyl-ACP esters. The polypeptide is Pimeloyl-[acyl-carrier protein] methyl ester esterase (Xanthomonas oryzae pv. oryzae (strain MAFF 311018)).